Consider the following 286-residue polypeptide: 4-hydroxybenzoate octaprenyltransferase (286 aa).

The next 8 membrane-spanning stretches (helical) occupy residues 20-40, 43-63, 96-116, 142-162, 167-187, 210-230, 235-255, and 266-286; these read IGTL…AGGM, LKVL…GCII, LFVI…GLVV, FLGV…TGEV, WWLF…YAMV, QIIG…GWSA, VYGL…MLIF, and FLNN…DYLF.

It belongs to the UbiA prenyltransferase family. Mg(2+) is required as a cofactor.

The protein resides in the cell inner membrane. It carries out the reaction all-trans-octaprenyl diphosphate + 4-hydroxybenzoate = 4-hydroxy-3-(all-trans-octaprenyl)benzoate + diphosphate. Its pathway is cofactor biosynthesis; ubiquinone biosynthesis. Its function is as follows. Catalyzes the prenylation of para-hydroxybenzoate (PHB) with an all-trans polyprenyl group. Mediates the second step in the final reaction sequence of ubiquinone-8 (UQ-8) biosynthesis, which is the condensation of the polyisoprenoid side chain with PHB, generating the first membrane-bound Q intermediate 3-octaprenyl-4-hydroxybenzoate. This Shewanella oneidensis (strain ATCC 700550 / JCM 31522 / CIP 106686 / LMG 19005 / NCIMB 14063 / MR-1) protein is 4-hydroxybenzoate octaprenyltransferase.